The chain runs to 257 residues: Type III pantothenate kinase (257 aa).

D6–V13 is an ATP binding site. G107–R110 provides a ligand contact to substrate. Residue D109 is the Proton acceptor of the active site. D129 contributes to the K(+) binding site. T132 lines the ATP pocket. T184 contacts substrate.

Belongs to the type III pantothenate kinase family. Homodimer. The cofactor is NH4(+). K(+) serves as cofactor.

The protein resides in the cytoplasm. The enzyme catalyses (R)-pantothenate + ATP = (R)-4'-phosphopantothenate + ADP + H(+). It functions in the pathway cofactor biosynthesis; coenzyme A biosynthesis; CoA from (R)-pantothenate: step 1/5. In terms of biological role, catalyzes the phosphorylation of pantothenate (Pan), the first step in CoA biosynthesis. This chain is Type III pantothenate kinase, found in Cereibacter sphaeroides (strain ATCC 17029 / ATH 2.4.9) (Rhodobacter sphaeroides).